We begin with the raw amino-acid sequence, 324 residues long: NADH-ubiquinone oxidoreductase chain 1 (324 aa).

8 helical membrane passes run 9–29 (LTMA…LTLV), 75–95 (ILFI…WIPL), 106–126 (LGLL…LWSG), 142–162 (VAQT…VIML), 177–197 (PLYL…STLA), 228–248 (LFFL…AILF), 259–279 (ELFP…FLWV), and 300–320 (LPLT…YAGI).

The protein belongs to the complex I subunit 1 family.

The protein localises to the mitochondrion inner membrane. It carries out the reaction a ubiquinone + NADH + 5 H(+)(in) = a ubiquinol + NAD(+) + 4 H(+)(out). In terms of biological role, core subunit of the mitochondrial membrane respiratory chain NADH dehydrogenase (Complex I) that is believed to belong to the minimal assembly required for catalysis. Complex I functions in the transfer of electrons from NADH to the respiratory chain. The immediate electron acceptor for the enzyme is believed to be ubiquinone. In Struthio camelus (Common ostrich), this protein is NADH-ubiquinone oxidoreductase chain 1 (MT-ND1).